The following is a 93-amino-acid chain: Bacterial microcompartment shell protein PduA (93 aa).

A BMC domain is found at 5-89; sequence ALGMVETKGL…PHTDVEKILP (85 aa).

It belongs to the bacterial microcompartments protein family. As to quaternary structure, homohexamer with a central pore; Lys-26 and Arg-79 interactions are very important for hexamer symmetry. The hexamers pack against each other in arrays. Interacts individually with shell proteins PduB, PduB', PduJ, PduK, PduN and PduU. Modeling suggests PduC, PduD, PduE, PduL and PduP interact with a cleft formed by the C-terminal segments of 2 adjacent PduA subunits (on the BMC luminal side) in the hexamer.

The protein localises to the bacterial microcompartment. It functions in the pathway polyol metabolism; 1,2-propanediol degradation. In terms of biological role, one of the major shell proteins of the bacterial microcompartment (BMC) dedicated to 1,2-propanediol (1,2-PD) degradation, probably important for metabolite diffusion into and out of the BMC. Overexpression of a C-terminally mutated form (PduA*) makes thin parallel filaments with a honeycomb-like assembly in cross-section that probably form nanotubes. The filaments interfere with septation. PduA is probably the hub for binding multiple enzymes to the interior of the BMC. At least one of PduA or PduJ is required for BMC assembly; it must be encoded as the first gene in the pdu operon. Its function is as follows. Expression of a cosmid containing the full 21-gene pdu operon in E.coli allows E.coli to grow on 1,2-PD with the appearance of BMCs in its cytoplasm. Overexpression of this protein leads to aberrant intracellular filaments. The 1,2-PD-specific bacterial microcompartment (BMC) concentrates low levels of 1,2-PD catabolic enzymes, concentrates volatile reaction intermediates thus enhancing pathway flux and keeps the level of toxic, mutagenic propionaldehyde low. In Citrobacter freundii, this protein is Bacterial microcompartment shell protein PduA.